We begin with the raw amino-acid sequence, 416 residues long: Choline/ethanolaminephosphotransferase 1 (416 aa).

Residues 1–20 are disordered; the sequence is MSGHRSTRKRCGDSHPESPV. The residue at position 18 (Ser18) is a Phosphoserine. Thr40 is subject to Phosphothreonine. Residue Asn86 coordinates CDP-choline. The next 2 helical transmembrane spans lie at 89 to 108 and 116 to 133; these read TIIG…FYCP and LWAY…QSLD. Mg(2+) is bound at residue Asp133. Asn144 carries N-linked (GlcNAc...) asparagine glycosylation. Glu151 serves as a coordination point for CDP-choline. Asp154 lines the Mg(2+) pocket. His155 acts as the Proton acceptor in catalysis. The next 8 membrane-spanning stretches (helical) occupy residues 156–176, 180–199, 210–230, 246–267, 286–306, 315–334, 349–363, and 368–388; these read GCDS…VQLG, DWMF…AHWQ, IIDV…AVIG, MKLL…NYFR, VLSP…IYKK, HPCL…TNKL, TAFI…DQYF, and DEYI…IRYC. Asp158 is a binding site for Mg(2+).

The protein belongs to the CDP-alcohol phosphatidyltransferase class-I family. As to quaternary structure, homodimer. Requires Mg(2+) as cofactor. Mn(2+) serves as cofactor.

It is found in the endoplasmic reticulum membrane. The protein resides in the nucleus membrane. The catalysed reaction is CDP-ethanolamine + a 1,2-diacyl-sn-glycerol = a 1,2-diacyl-sn-glycero-3-phosphoethanolamine + CMP + H(+). It carries out the reaction CDP-choline + a 1,2-diacyl-sn-glycerol = a 1,2-diacyl-sn-glycero-3-phosphocholine + CMP + H(+). It catalyses the reaction 1-O-alkyl-2-acyl-sn-glycerol + CDP-choline = a 1-O-alkyl-2-acyl-sn-glycero-3-phosphocholine + CMP + H(+). The enzyme catalyses a 1-O-(1Z-alkenyl)-2-acyl-sn-glycerol + CDP-choline = a 1-O-(1Z-alkenyl)-2-acyl-sn-glycero-3-phosphocholine + CMP + H(+). The catalysed reaction is 1,2-dioctanoyl-sn-glycerol + CDP-choline = 1,2-dioctanoyl-sn-glycero-3-phosphocholine + CMP + H(+). It carries out the reaction 1,2-didecanoyl-sn-glycerol + CDP-choline = 1,2-didecanoyl-sn-glycero-3-phosphocholine + CMP + H(+). It catalyses the reaction CDP-choline + 1,2-di-(9Z-octadecenoyl)-sn-glycerol = 1,2-di-(9Z-octadecenoyl)-sn-glycero-3-phosphocholine + CMP + H(+). The enzyme catalyses 1-hexadecanoyl-2-(9Z-octadecenoyl)-sn-glycerol + CDP-choline = 1-hexadecanoyl-2-(9Z-octadecenoyl)-sn-glycero-3-phosphocholine + CMP + H(+). The catalysed reaction is CDP-ethanolamine + 1,2-di-(9Z-octadecenoyl)-sn-glycerol = 1,2-di-(9Z-octadecenoyl)-sn-glycero-3-phosphoethanolamine + CMP + H(+). It carries out the reaction 1-hexadecanoyl-2-(9Z-octadecenoyl)-sn-glycerol + CDP-ethanolamine = 1-hexadecanoyl-2-(9Z-octadecenoyl)-sn-glycero-3-phosphoethanolamine + CMP + H(+). It catalyses the reaction 1-hexadecanoyl-2-(4Z,7Z,10Z,13Z,16Z,19Z-docosahexaenoyl)-sn-glycerol + CDP-choline = 1-hexadecanoyl-2-(4Z,7Z,10Z,13Z,16Z,19Z-docosahexaenoyl)-sn-glycero-3-phosphocholine + CMP + H(+). The enzyme catalyses 1,2-di-(9Z-hexadecenoyl)-sn-glycerol + CDP-choline = 1,2-di-(9Z-hexadecenoyl)-sn-glycero-3-phosphocholine + CMP + H(+). The catalysed reaction is 1,2-di-(9Z-hexadecenoyl)-sn-glycerol + CDP-ethanolamine = 1,2-di-(9Z-hexadecenoyl)-sn-glycero-3-phosphoethanolamine + CMP + H(+). It carries out the reaction 1-O-hexadecyl-2-acetyl-sn-glycerol + CDP-choline = 1-O-hexadecyl-2-acetyl-sn-glycero-3-phosphocholine + CMP + H(+). It catalyses the reaction 1-O-hexadecyl-2-(5Z,8Z,11Z,14Z-eicosatetraenoyl)-sn-glycerol + CDP-choline = 1-O-hexadecyl-2-(5Z,8Z,11Z,14Z)-eicosatetraenoyl-sn-glycero-3-phosphocholine + CMP + H(+). It participates in phospholipid metabolism; phosphatidylethanolamine biosynthesis; phosphatidylethanolamine from ethanolamine: step 3/3. It functions in the pathway phospholipid metabolism; phosphatidylcholine biosynthesis; phosphatidylcholine from phosphocholine: step 2/2. In terms of biological role, catalyzes both phosphatidylcholine and phosphatidylethanolamine biosynthesis from CDP-choline and CDP-ethanolamine, respectively. Involved in protein-dependent process of phospholipid transport to distribute phosphatidyl choline to the lumenal surface. Has a higher cholinephosphotransferase activity than ethanolaminephosphotransferase activity. This is Choline/ethanolaminephosphotransferase 1 from Mus musculus (Mouse).